The following is a 1367-amino-acid chain: MARQMTSSQFHKSKTLDNKYMLGDEIGKGAYGRVYIGLDLENGDFVAIKQVSLENIGQEDLNTIMQEIDLLKNLNHKNIVKYLGSLKTKTHLHIILEYVENGSLANIIKPNKFGPFPESLVTVYIAQVLEGLVYLHEQGVIHRDIKGANILTTKEGLVKLADFGVATKLNEADFNTHSVVGTPYWMAPEVIELSGVCAASDIWSVGCTIIELLTCVPPYYDLQPMPALYRIVQDDTPPIPDSLSPDITDFLRLCFKKDSRQRPDAKTLLSHPWIRNSRRALRSSLRHSGTIRYMKETDSSSEKDAEGSQEVVESVSAEKVEVTKTNSKSKLPVIGGASFRSEKDQSSPSDLGEEGTDSEDDINSDQGPTLSMHDKSSRQSGTCSISSDAKGTSQDVLENHEKYDRDEIPGNLETEASEGRRNTLATKLVGKEYSIQSSHSFSQKGEDGLRKAVKTPSSFGGNELTRFSDPPGDASLHDLFHPLDKVPEGKTNEASTSTPTANVNQGDSPVADGGKNDLATKLRARIAQKQMEGETGHSQDGGDLFRLMMGVLKDDVLNIDDLVFDEKVPPENLFPLQAVEFSRLVSSLRPDESEDAIVTSSLKLVAMFRQRPGQKAVFVTQNGFLPLMDLLDIPKSRVICAVLQLINEIVKDNTDFLENACLVGLIPLVMSFAGFERDRSREIRKEAAYFLQQLCQSSPLTLQMFISCRGIPVLVGFLEADYAKHREMVHLAIDGMWQVFKLKKSTSRNDFCRIAAKNGILLRLVNTLYSLSEATRLASISGDALILDGQTPRARSGQLDPNNPIFSQRETSPSVIDHPDGLKTRNGGGEEPSHALTSNSQSSDVHQPDALHPDGDRPRLSSVVADATEDVIQQHRISLSANRTSTDKLQKLAEGASNGFPVTQPDQVRPLLSLLEKEPPSRKISGQLDYVKHIAGIERHESRLPLLYASDEKKTNGDLEFIMAEFAEVSGRGKENGNLDTAPRYSSKTMTKKVMAIERVASTCGIASQTASGVLSGSGVLNARPGSTTSSGLLAHALSADVSMDYLEKVADLLLEFARAETTVKSYMCSQSLLSRLFQMFNRVEPPILLKILECTNHLSTDPNCLENLQRADAIKQLIPNLELKEGPLVYQIHHEVLSALFNLCKINKRRQEQAAENGIIPHLMLFVMSDSPLKQYALPLLCDMAHASRNSREQLRAHGGLDVYLSLLDDEYWSVIALDSIAVCLAQDVDQKVEQAFLKKDAIQKLVNFFQNCPERHFVHILEPFLKIITKSSSINKTLALNGLTPLLIARLDHQDAIARLNLLKLIKAVYEKHPKPKQLIVENDLPQKLQNLIEERRDGQRSGGQVLVKQMATSLLKALHINTIL.

One can recognise a Protein kinase domain in the interval 20–274 (YMLGDEIGKG…AKTLLSHPWI (255 aa)). 2 HEAT repeats span residues 25–62 (EIGK…EDLN) and 86–125 (LKTK…TVYI). ATP is bound by residues 26 to 34 (IGKGAYGRV) and lysine 49. Catalysis depends on aspartate 144, which acts as the Proton acceptor. The HEAT 3 repeat unit spans residues 218–256 (PYYDLQPMPALYRIVQDDTPPIPDSLSPDITDFLRLCFK). Disordered stretches follow at residues 285 to 422 (LRHS…GRRN) and 437 to 513 (SSHS…VADG). Over residues 293 to 306 (YMKETDSSSEKDAE) the composition is skewed to basic and acidic residues. Over residues 351-363 (LGEEGTDSEDDIN) the composition is skewed to acidic residues. Polar residues predominate over residues 378–396 (RQSGTCSISSDAKGTSQDV). Composition is skewed to basic and acidic residues over residues 397–408 (LENHEKYDRDEI) and 475–491 (SLHD…EGKT). Over residues 492-507 (NEASTSTPTANVNQGD) the composition is skewed to polar residues. HEAT repeat units lie at residues 538–576 (SQDG…LFPL), 577–614 (QAVE…RPGQ), 633–658 (IPKS…DFLE), 659–700 (NACL…SSPL), and 704–742 (MFIS…VFKL). The interval 792–860 (PRARSGQLDP…LHPDGDRPRL (69 aa)) is disordered. 2 stretches are compositionally biased toward polar residues: residues 799–814 (LDPN…TSPS) and 835–845 (ALTSNSQSSDV). Positions 846 to 859 (HQPDALHPDGDRPR) are enriched in basic and acidic residues. HEAT repeat units lie at residues 850-888 (ALHP…STDK), 906-943 (DQVR…HESR), 1045-1066 (DYLE…TVKS), 1067-1105 (YMCS…DPNC), 1112-1150 (ADAI…INKR), 1154-1191 (QAAE…ASRN), 1196-1236 (LRAH…KVEQ), 1257-1280 (RHFV…NKTL), 1281-1317 (ALNG…KHPK), and 1347-1367 (QVLV…NTIL).

Belongs to the protein kinase superfamily. Ser/Thr protein kinase family. Autophosphorylated. In terms of tissue distribution, expressed in both the sporophytic and the gametophytic tissues, especially in dividing cells. Mostly present in flower buds and mature flowers. Also accumulates in embryos and in roots.

The protein resides in the cytoplasm. It is found in the cytoskeleton. Its subcellular location is the microtubule organizing center. It localises to the nucleus. The protein localises to the nucleolus. The protein resides in the cell membrane. The catalysed reaction is L-seryl-[protein] + ATP = O-phospho-L-seryl-[protein] + ADP + H(+). It catalyses the reaction L-threonyl-[protein] + ATP = O-phospho-L-threonyl-[protein] + ADP + H(+). In terms of biological role, serine/threonine-protein kinase involved in the spatial and temporal control system organizing cortical activities in mitotic and postmitotic cells. Required for the normal functioning of the plasma membrane in developing pollen. Involved in the regulation of cell expansion and embryo development. This is MAP3K epsilon protein kinase 2 from Arabidopsis thaliana (Mouse-ear cress).